A 163-amino-acid polypeptide reads, in one-letter code: uncharacterized protein (163 aa).

In terms of domain architecture, N-acetyltransferase spans 7–162; that stretch reads ISISAVKLPQ…NVVYMRLEMS (156 aa).

This sequence belongs to the acetyltransferase family.

Its subcellular location is the cytoplasm. It localises to the nucleus. This is an uncharacterized protein from Schizosaccharomyces pombe (strain 972 / ATCC 24843) (Fission yeast).